The chain runs to 211 residues: UPF0637 protein BLi01683/BL05149 (211 aa).

The protein belongs to the UPF0637 family.

In Bacillus licheniformis (strain ATCC 14580 / DSM 13 / JCM 2505 / CCUG 7422 / NBRC 12200 / NCIMB 9375 / NCTC 10341 / NRRL NRS-1264 / Gibson 46), this protein is UPF0637 protein BLi01683/BL05149.